Reading from the N-terminus, the 200-residue chain is Histone chaperone asf1b (200 aa).

This sequence belongs to the ASF1 family. As to quaternary structure, interacts with histone H3 and histone H4.

The protein resides in the nucleus. Functionally, histone chaperone that facilitates histone deposition and histone exchange and removal during nucleosome assembly and disassembly. In Xenopus tropicalis (Western clawed frog), this protein is Histone chaperone asf1b (asf1b).